The chain runs to 335 residues: Biotin synthase (335 aa).

A Radical SAM core domain is found at 39 to 267 (TKIQVCKLIS…ASDVRLSAGR (229 aa)). Residues Cys54, Cys58, and Cys61 each contribute to the [4Fe-4S] cluster site. 4 residues coordinate [2Fe-2S] cluster: Cys98, Cys130, Cys190, and Arg262.

This sequence belongs to the radical SAM superfamily. Biotin synthase family. As to quaternary structure, homodimer. [4Fe-4S] cluster is required as a cofactor. It depends on [2Fe-2S] cluster as a cofactor.

The enzyme catalyses (4R,5S)-dethiobiotin + (sulfur carrier)-SH + 2 reduced [2Fe-2S]-[ferredoxin] + 2 S-adenosyl-L-methionine = (sulfur carrier)-H + biotin + 2 5'-deoxyadenosine + 2 L-methionine + 2 oxidized [2Fe-2S]-[ferredoxin]. It functions in the pathway cofactor biosynthesis; biotin biosynthesis; biotin from 7,8-diaminononanoate: step 2/2. Catalyzes the conversion of dethiobiotin (DTB) to biotin by the insertion of a sulfur atom into dethiobiotin via a radical-based mechanism. The chain is Biotin synthase from Nostoc punctiforme (strain ATCC 29133 / PCC 73102).